A 204-amino-acid polypeptide reads, in one-letter code: High mobility group-T protein (204 aa).

2 consecutive DNA-binding regions (HMG box) follow at residues 8–78 (PRGK…RSYI) and 94–162 (PKRP…TAYR). A disordered region spans residues 162–204 (RNKGKVPVSMPAKAAAPAKDDDDDDDDDDDDEDDDDDDDEDDE). A compositionally biased stretch (acidic residues) spans 181-204 (DDDDDDDDDDDDEDDDDDDDEDDE).

The protein belongs to the HMGB family.

It localises to the nucleus. The protein localises to the chromosome. Functionally, binds preferentially single-stranded DNA and unwinds double-stranded DNA. This is High mobility group-T protein from Oncorhynchus mykiss (Rainbow trout).